The chain runs to 139 residues: D-ribose pyranase (139 aa).

H20 acts as the Proton donor in catalysis. Substrate is bound by residues D28, H106, and 128–130 (FAN).

Belongs to the RbsD / FucU family. RbsD subfamily. Homodecamer.

The protein resides in the cytoplasm. It catalyses the reaction beta-D-ribopyranose = beta-D-ribofuranose. It functions in the pathway carbohydrate metabolism; D-ribose degradation; D-ribose 5-phosphate from beta-D-ribopyranose: step 1/2. In terms of biological role, catalyzes the interconversion of beta-pyran and beta-furan forms of D-ribose. The polypeptide is D-ribose pyranase (Yersinia enterocolitica serotype O:8 / biotype 1B (strain NCTC 13174 / 8081)).